Consider the following 626-residue polypeptide: Putative ankyrin repeat protein R837 (626 aa).

18 ANK repeats span residues 42–72 (EYFN…GLIR), 80–109 (TLNT…NHRY), 110–139 (SEDK…NIKS), 140–169 (RNNY…DITV), 171–199 (DYEV…DIKK), 201–230 (NKKR…DVYR), 242–269 (KNYK…YQLS), 270–298 (DTNN…LHEL), 299–328 (NLNQ…DINT), 330–358 (GNSC…RLTS), 393–416 (TIMS…KSSL), 417–446 (DYES…ITKQ), 452–479 (INNS…GINI), 480–509 (CINY…NINE), 510–539 (FGDL…NIYI), 540–569 (IKDN…DYHK), 570–599 (KNEL…KTKT), and 601–626 (FFDP…NEIK).

This is Putative ankyrin repeat protein R837 from Acanthamoeba polyphaga (Amoeba).